Reading from the N-terminus, the 4882-residue chain is Dual E2 ubiquitin-conjugating enzyme/E3 ubiquitin-protein ligase BIRC6 (4882 aa).

WD repeat units follow at residues 71 to 109 and 110 to 139; these read DGLHSLSYHPALNAILAVTSRGTIKVIDGTSGATLQASA and LSAKPGGQVKCQYISAVDKVIFVDDYAVGC. Residues 292-362 form a BIR repeat; the sequence is RRETFTSWPH…RHSPNCPFVK (71 aa). 4 residues coordinate Zn(2+): Cys-331, Cys-334, His-351, and Cys-358. A WD 3 repeat occupies 382–429; sequence LPSADGADRIACFGSGSCPQFLAAATKRGKICIWDVSKLMKVHLKFEI. 3 disordered regions span residues 468–502, 542–561, and 582–622; these read DIPKLEGDSDDLLEDSDSEEHSRSDSVTGHTSQKE, GANPSLTNSKSEKTKEKHQE, and ATSP…SELN. Positions 475–485 are enriched in acidic residues; sequence DSDDLLEDSDS. 3 positions are modified to phosphoserine: Ser-476, Ser-483, and Ser-485. 4 WD repeats span residues 504-723, 733-854, 855-931, and 932-970; these read MEVS…VQCL, TLCI…QHIK, DPQD…AKVE, and PPKKEGTEEQDTFVSVIYCSGTDRLCACTKGGELHFLQI. Residues 551-561 show a composition bias toward basic and acidic residues; sequence KSEKTKEKHQE. Residues 582-591 show a composition bias toward polar residues; it reads ATSPISSNSH. Phosphoserine is present on residues Ser-584 and Ser-593. The span at 598–622 shows a compositional bias: polar residues; the sequence is SRTQGESISEQGSTDNESCTNSELN. Positions 1057 to 1077 are disordered; that stretch reads QQQRRHPQHLHQQHHGDAAQH. The segment covering 1060 to 1069 has biased composition (basic residues); sequence RRHPQHLHQQ. A Phosphothreonine modification is found at Thr-1724. Ser-2245 and Ser-2978 each carry phosphoserine. Residues 2969-2998 are disordered; it reads VTTNTTDSVSDEEKVSGGKDVNGSSASTPG. Residues 3212-3216 are HRRAR loop; important for DIABLO/SMAC and HTRA2 binding; sequence HRRAR. Positions 3842-4092 constitute a Ubiquitin-like domain; it reads DEKVTMFLQS…ESLLETCPIQ (251 aa). Disordered regions lie at residues 3908 to 3927 and 3943 to 3973; these read SEQKDDKEKKNHEEKEKVKA and LKSQSKRAMASTPPRPPSRRGRTIPDKIGSA. Residue Thr-3954 is modified to Phosphothreonine. Position 4047 is a phosphoserine (Ser-4047). The disordered stretch occupies residues 4285–4304; sequence VPNSSLSQTEPQVSNSHNPT. Residues 4286–4304 are compositionally biased toward polar residues; the sequence is PNSSLSQTEPQVSNSHNPT. A UBC core domain is found at 4598-4765; that stretch reads ARARRLAQEA…IRQATVKWAM (168 aa). The Glycyl thioester intermediate role is filled by Cys-4691. Residues 4857-4882 are disordered; that stretch reads AGAEDTLTHDHVNPSSSKDLPSDFQL. A compositionally biased stretch (polar residues) spans 4869 to 4882; it reads NPSSSKDLPSDFQL.

Belongs to the BIRC6 family. As to quaternary structure, homodimer; antiparallel. Interacts with DIABLO/SMAC, likely with higher affinity to SMAC dimer than SMAC monomer; this interaction blocks the substrate-binding site and inhibits the caspase inhibition activity of BIRC6. Interacts with RNF41, KIF23/MKLP1, USP8/UBPY, BIRC5/survivin, MAP2K1/MEK1, RAB8A/RAB8, RAB11A/RAB11, PLK1, EXOC3/SEC6 and EXOC4/SEC8. Ubiquitinated. Ubiquitination is mediated by RNF41 E3 ligase and leads to proteasomal degradation, impairing inhibition of apoptosis. Deubiquitinated by USP8/UBPY. Autoubiquitinated; mediated by E1 ubiquitin activating enzyme UBA6. Post-translationally, proteolytically cleaved. Acts as substrate for CASP3, CASP6, CASP7, CASP9 and HTRA2. As to expression, widely expressed. Highly expressed in the brain and kidney.

Its subcellular location is the golgi apparatus. It is found in the trans-Golgi network membrane. It localises to the endosome. The protein resides in the cytoplasm. The protein localises to the cytoskeleton. Its subcellular location is the spindle pole. It is found in the microtubule organizing center. It localises to the centrosome. The protein resides in the midbody. The protein localises to the midbody ring. It carries out the reaction S-ubiquitinyl-[E1 ubiquitin-activating enzyme]-L-cysteine + [acceptor protein]-L-lysine = [E1 ubiquitin-activating enzyme]-L-cysteine + N(6)-monoubiquitinyl-[acceptor protein]-L-lysine.. Inhibited by DIABLO/SMAC, which competes for the substrate-binding sites on BIRC6. BIRC6 inhibits caspases and protease by ubiquitination but BIRC6 itself is subjected to protease cleavage by CASP3, CASP6, CASP7, CASP9 and HTRA2 by protease cleavage. In terms of biological role, anti-apoptotic protein known as inhibitor of apoptosis (IAP) which can regulate cell death by controlling caspases and by acting as an E3 ubiquitin-protein ligase. Unlike most IAPs, does not contain a RING domain and it is not a RING-type E3 ligase. Instead acts as a dual E2/E3 enzyme that combines ubiquitin conjugating (E2) and ubiquitin ligase (E3) activities in a single polypeptide. Ubiquitination is mediated by a non-canonical E1 ubiquitin activating enzyme UBA6. Ubiquitinates CASP3, CASP7 and CASP9 and inhibits their caspase activity; also ubiquitinates their procaspases but to a weaker extent. Ubiquitinates pro-apoptotic factors DIABLO/SMAC and HTRA2. DIABLO/SMAC antagonizes the caspase inhibition activity of BIRC6 by competing for the same binding sites as the caspases. Ubiquitinates the autophagy protein MAP1LC3B; this activity is also inhibited by DIABLO/SMAC. Important regulator for the final stages of cytokinesis. Crucial for normal vesicle targeting to the site of abscission, but also for the integrity of the midbody and the midbody ring, and its striking ubiquitin modification. Required for normal placenta development. The chain is Dual E2 ubiquitin-conjugating enzyme/E3 ubiquitin-protein ligase BIRC6 (Birc6) from Mus musculus (Mouse).